The sequence spans 344 residues: MKVIKTAPLIPSEIKVLEKEGNRVKISLAPFEFGYAVTLAHPIRRLLLLSSVGYAPVGLKIEGVHHEFDSLRGVTEDVSLFIMNLKNIRFIAKALVGQDSSLENQSVVVDYSFKGPMELRARDLNSEQIEIVNPEMPLATINEDAQLNFSLIIYKGMGYVPSENTRELMPEGYMPLDGSFTPIKKVVYEIENVLVEGDPNYEKIIFDIETDGQIDPYKAFLSAVKVMSKQLGVFGERPIANTEYSGDYAQRDDAKDLSAKIESMNLSARCFNCLDKIGIKYVGELVLMSEEELKGVKNMGKKSYDEIAEKLNDLGYPVGTELSPEQRESLKKRLEKLEDKGGND.

The segment at 1–238 (MKVIKTAPLI…KQLGVFGERP (238 aa)) is alpha N-terminal domain (alpha-NTD). Residues 254–344 (AKDLSAKIES…EKLEDKGGND (91 aa)) are alpha C-terminal domain (alpha-CTD).

The protein belongs to the RNA polymerase alpha chain family. In terms of assembly, homodimer. The RNAP catalytic core consists of 2 alpha, 1 beta, 1 beta' and 1 omega subunit. When a sigma factor is associated with the core the holoenzyme is formed, which can initiate transcription.

It catalyses the reaction RNA(n) + a ribonucleoside 5'-triphosphate = RNA(n+1) + diphosphate. Functionally, DNA-dependent RNA polymerase catalyzes the transcription of DNA into RNA using the four ribonucleoside triphosphates as substrates. In Helicobacter pylori (strain ATCC 700392 / 26695) (Campylobacter pylori), this protein is DNA-directed RNA polymerase subunit alpha.